The following is a 385-amino-acid chain: tRNA(Met) cytidine acetate ligase (385 aa).

ATP-binding positions include 7 to 20 (VAEY…HEFL), G101, N153, and R178.

Belongs to the TmcAL family.

It localises to the cytoplasm. It catalyses the reaction cytidine(34) in elongator tRNA(Met) + acetate + ATP = N(4)-acetylcytidine(34) in elongator tRNA(Met) + AMP + diphosphate. Its function is as follows. Catalyzes the formation of N(4)-acetylcytidine (ac(4)C) at the wobble position of elongator tRNA(Met), using acetate and ATP as substrates. First activates an acetate ion to form acetyladenylate (Ac-AMP) and then transfers the acetyl group to tRNA to form ac(4)C34. The protein is tRNA(Met) cytidine acetate ligase of Lactobacillus gasseri (strain ATCC 33323 / DSM 20243 / BCRC 14619 / CIP 102991 / JCM 1131 / KCTC 3163 / NCIMB 11718 / NCTC 13722 / AM63).